Reading from the N-terminus, the 528-residue chain is Calcium-dependent protein kinase 13 (528 aa).

Glycine 2 is lipidated: N-myristoyl glycine. Residues 17–32 (KSNYSGHDHARKDAAG) show a composition bias toward basic and acidic residues. Positions 17–37 (KSNYSGHDHARKDAAGGKKSA) are disordered. Position 43 is a phosphoserine (serine 43). The Protein kinase domain occupies 54 to 312 (YLLDRELGRG…AKQVLEHPWI (259 aa)). Residues 60 to 68 (LGRGEFGVT) and lysine 83 contribute to the ATP site. Residue aspartate 178 is the Proton acceptor of the active site. Serine 218 carries the post-translational modification Phosphoserine. The interval 318 to 348 (APNVPLGDVVKSRLKQFSVMNRFKRKALRVI) is autoinhibitory domain. EF-hand domains lie at 355-390 (EEVEDIKVMFNKMDTDNDGIVSIEELKAGLRDFSTQ), 391-426 (LAESEVQMLIEAVDTKGKGTLDYGEFVAVSLHLQKV), 427-462 (ANDEHLRKAFSYFDKDGNGYILPQELCDALKEDGGD), and 463-498 (DCVDVANDIFQEVDTDKDGRISYEEFAAMMKTGTDW). The Ca(2+) site is built by aspartate 368, aspartate 370, aspartate 372, glutamate 379, aspartate 404, threonine 410, glutamate 415, aspartate 440, aspartate 442, asparagine 444, tyrosine 446, glutamate 451, aspartate 476, aspartate 478, aspartate 480, and arginine 482. At serine 484 the chain carries Phosphoserine. Glutamate 487 is a binding site for Ca(2+). At serine 522 the chain carries Phosphoserine.

The protein belongs to the protein kinase superfamily. Ser/Thr protein kinase family. CDPK subfamily.

It is found in the cell membrane. It carries out the reaction L-seryl-[protein] + ATP = O-phospho-L-seryl-[protein] + ADP + H(+). The enzyme catalyses L-threonyl-[protein] + ATP = O-phospho-L-threonyl-[protein] + ADP + H(+). With respect to regulation, activated by calcium. Autophosphorylation may play an important role in the regulation of the kinase activity. In terms of biological role, may play a role in signal transduction pathways that involve calcium as a second messenger. This chain is Calcium-dependent protein kinase 13 (CPK13), found in Arabidopsis thaliana (Mouse-ear cress).